Here is a 195-residue protein sequence, read N- to C-terminus: Lipid A acyltransferase PagP (195 aa).

The signal sequence occupies residues 1 to 30; it reads MRLTLTSRSRLFVLSSLLFISTFDVLSAQA. Catalysis depends on residues His-67, Asp-110, and Ser-111.

This sequence belongs to the lipid A palmitoyltransferase family. As to quaternary structure, homodimer.

Its subcellular location is the cell outer membrane. The enzyme catalyses a lipid A + a 1,2-diacyl-sn-glycero-3-phosphocholine = a hepta-acyl lipid A + a 2-acyl-sn-glycero-3-phosphocholine. It catalyses the reaction a lipid IVA + a 1,2-diacyl-sn-glycero-3-phosphocholine = a lipid IVB + a 2-acyl-sn-glycero-3-phosphocholine. The catalysed reaction is a lipid IIA + a 1,2-diacyl-sn-glycero-3-phosphocholine = a lipid IIB + a 2-acyl-sn-glycero-3-phosphocholine. Its function is as follows. Transfers a fatty acid residue from the sn-1 position of a phospholipid to the N-linked hydroxyfatty acid chain on the proximal unit of lipid A or its precursors. The sequence is that of Lipid A acyltransferase PagP from Dickeya chrysanthemi (strain Ech1591) (Dickeya zeae (strain Ech1591)).